The primary structure comprises 193 residues: Large ribosomal subunit protein bL21 (193 aa).

This sequence belongs to the bacterial ribosomal protein bL21 family. In terms of assembly, part of the 50S ribosomal subunit. Contacts protein L20.

This protein binds to 23S rRNA in the presence of protein L20. This Ruegeria pomeroyi (strain ATCC 700808 / DSM 15171 / DSS-3) (Silicibacter pomeroyi) protein is Large ribosomal subunit protein bL21.